The following is a 471-amino-acid chain: Ubiquitin-conjugating enzyme E2 variant 3 (471 aa).

The region spanning 2–145 is the UEV domain; the sequence is DVNSEPVKKV…EEEPPLGTKS (144 aa). 183–211 lines the NAD(+) pocket; it reads GDLGIAAVLSIMAKSCVDKLVLIDIPENS.

The protein in the N-terminal section; belongs to the ubiquitin-conjugating enzyme family. UEV subfamily. In the C-terminal section; belongs to the LDH/MDH superfamily. In terms of assembly, homodimer.

In terms of biological role, possible negative regulator of polyubiquitination. The sequence is that of Ubiquitin-conjugating enzyme E2 variant 3 (uevld) from Danio rerio (Zebrafish).